We begin with the raw amino-acid sequence, 217 residues long: tRNA (guanine-N(7)-)-methyltransferase (217 aa).

Positions 43, 68, 101, and 123 each coordinate S-adenosyl-L-methionine. Lys127 is a binding site for substrate. Positions 129-134 (KHNKRR) are interaction with RNA. Substrate-binding positions include Asp159 and 196–199 (TEYE).

Belongs to the class I-like SAM-binding methyltransferase superfamily. TrmB family.

The catalysed reaction is guanosine(46) in tRNA + S-adenosyl-L-methionine = N(7)-methylguanosine(46) in tRNA + S-adenosyl-L-homocysteine. Its pathway is tRNA modification; N(7)-methylguanine-tRNA biosynthesis. Functionally, catalyzes the formation of N(7)-methylguanine at position 46 (m7G46) in tRNA. This is tRNA (guanine-N(7)-)-methyltransferase from Clostridium botulinum (strain Okra / Type B1).